Here is a 334-residue protein sequence, read N- to C-terminus: Glyceraldehyde-3-phosphate dehydrogenase (334 aa).

NAD(+) is bound by residues 12–13, aspartate 37, arginine 81, and serine 123; that span reads RI. Residues 153-155 and threonine 184 each bind D-glyceraldehyde 3-phosphate; that span reads SCT. The active-site Nucleophile is the cysteine 154. NAD(+) is bound at residue asparagine 185. Residues arginine 199, 212–213, and arginine 235 each bind D-glyceraldehyde 3-phosphate; that span reads TG. Asparagine 314 serves as a coordination point for NAD(+).

The protein belongs to the glyceraldehyde-3-phosphate dehydrogenase family. Homotetramer.

The protein localises to the cytoplasm. The enzyme catalyses D-glyceraldehyde 3-phosphate + phosphate + NAD(+) = (2R)-3-phospho-glyceroyl phosphate + NADH + H(+). The protein operates within carbohydrate degradation; glycolysis; pyruvate from D-glyceraldehyde 3-phosphate: step 1/5. Functionally, catalyzes the oxidative phosphorylation of glyceraldehyde 3-phosphate (G3P) to 1,3-bisphosphoglycerate (BPG) using the cofactor NAD. The first reaction step involves the formation of a hemiacetal intermediate between G3P and a cysteine residue, and this hemiacetal intermediate is then oxidized to a thioester, with concomitant reduction of NAD to NADH. The reduced NADH is then exchanged with the second NAD, and the thioester is attacked by a nucleophilic inorganic phosphate to produce BPG. The chain is Glyceraldehyde-3-phosphate dehydrogenase (gap) from Pseudomonas aeruginosa (strain ATCC 15692 / DSM 22644 / CIP 104116 / JCM 14847 / LMG 12228 / 1C / PRS 101 / PAO1).